Reading from the N-terminus, the 1340-residue chain is DNA-directed RNA polymerase subunit beta (1340 aa).

The protein belongs to the RNA polymerase beta chain family. The RNAP catalytic core consists of 2 alpha, 1 beta, 1 beta' and 1 omega subunit. When a sigma factor is associated with the core the holoenzyme is formed, which can initiate transcription.

The enzyme catalyses RNA(n) + a ribonucleoside 5'-triphosphate = RNA(n+1) + diphosphate. Its function is as follows. DNA-dependent RNA polymerase catalyzes the transcription of DNA into RNA using the four ribonucleoside triphosphates as substrates. This is DNA-directed RNA polymerase subunit beta from Baumannia cicadellinicola subsp. Homalodisca coagulata.